The primary structure comprises 59 residues: Potassium channel toxin alpha-KTx 1.12 (59 aa).

The first 22 residues, 1–22 (MKILSVLLLALIICSIVGWSEA), serve as a signal peptide directing secretion. Gln23 bears the Pyrrolidone carboxylic acid mark. Intrachain disulfides connect Cys29–Cys50, Cys35–Cys55, and Cys39–Cys57. An interaction with Ca(2+)-activated K(+) channels region spans residues 48-55 (GKCMNKKC).

It belongs to the short scorpion toxin superfamily. Potassium channel inhibitor family. Alpha-KTx 01 subfamily. As to expression, expressed by the venom gland.

It localises to the secreted. Functionally, potent selective inhibitor of high conductance (maxi-K), different medium and small conductance calcium-activated potassium channels (KCa1.1/KCNMA1 and others), as well as a voltage-dependent potassium channel (Kv1.3/KCNA3&gt;Kv1.2/KCNA2&gt;Kv1.6/KCNA3&gt;&gt;Shaker/Sh). It blocks channel activity by a simple bimolecular inhibition process. Its function is as follows. Has a pH-specific antimicrobial activity against bacteria (B.subtilis, E.coli and S.aureus) and the fungus C.albicans. The protein is Potassium channel toxin alpha-KTx 1.12 of Leiurus hebraeus (Hebrew deathstalker scorpion).